The sequence spans 642 residues: Wall-associated receptor kinase-like 6 (642 aa).

Residues M1–A28 form the signal peptide. Topologically, residues A29 to S357 are extracellular. N-linked (GlcNAc...) asparagine glycosylation is found at N37, N72, N95, N137, N216, N240, and N276. Residues C289 to C346 are atypical EGF-like. Intrachain disulfides connect C291–C304, C326–C337, and C332–C346. A helical transmembrane segment spans residues V358–L378. At Y379–N642 the chain is on the cytoplasmic side. The region spanning F432–N642 is the Protein kinase domain. ATP is bound by residues L438–V446 and K460. Y505 bears the Phosphotyrosine mark. The active-site Proton acceptor is D559. Residues T593 and T598 each carry the phosphothreonine modification. The residue at position 606 (Y606) is a Phosphotyrosine.

Belongs to the protein kinase superfamily. Ser/Thr protein kinase family. In terms of tissue distribution, slightly expressed in the whole plant.

The protein localises to the membrane. The catalysed reaction is L-seryl-[protein] + ATP = O-phospho-L-seryl-[protein] + ADP + H(+). It catalyses the reaction L-threonyl-[protein] + ATP = O-phospho-L-threonyl-[protein] + ADP + H(+). Serine/threonine-protein kinase that may function as a signaling receptor of extracellular matrix component. The sequence is that of Wall-associated receptor kinase-like 6 (WAKL6) from Arabidopsis thaliana (Mouse-ear cress).